Reading from the N-terminus, the 430-residue chain is Enolase (430 aa).

Glutamine 167 is a binding site for (2R)-2-phosphoglycerate. Catalysis depends on glutamate 209, which acts as the Proton donor. Residues aspartate 246, glutamate 289, and aspartate 316 each contribute to the Mg(2+) site. (2R)-2-phosphoglycerate-binding residues include lysine 341, arginine 370, serine 371, and lysine 392. The active-site Proton acceptor is lysine 341.

The protein belongs to the enolase family. As to quaternary structure, component of the RNA degradosome, a multiprotein complex involved in RNA processing and mRNA degradation. The cofactor is Mg(2+).

The protein resides in the cytoplasm. The protein localises to the secreted. It localises to the cell surface. The enzyme catalyses (2R)-2-phosphoglycerate = phosphoenolpyruvate + H2O. It participates in carbohydrate degradation; glycolysis; pyruvate from D-glyceraldehyde 3-phosphate: step 4/5. Functionally, catalyzes the reversible conversion of 2-phosphoglycerate (2-PG) into phosphoenolpyruvate (PEP). It is essential for the degradation of carbohydrates via glycolysis. This Alcanivorax borkumensis (strain ATCC 700651 / DSM 11573 / NCIMB 13689 / SK2) protein is Enolase.